Here is a 91-residue protein sequence, read N- to C-terminus: Putative defensin-like protein 83 (91 aa).

Residues 1–27 (MATNKFLSILLLSLMAFAAILLPMISG) form the signal peptide. Disulfide bonds link Cys32-Cys71, Cys37-Cys57, Cys43-Cys69, and Cys47-Cys70.

The protein belongs to the DEFL family.

It localises to the secreted. The protein is Putative defensin-like protein 83 (LCR46) of Arabidopsis thaliana (Mouse-ear cress).